We begin with the raw amino-acid sequence, 551 residues long: Hedycaryol synthase TPS20CT (551 aa).

5 residues coordinate (2E,6E)-farnesyl diphosphate: Arg266, Asp303, Asp307, Arg444, and Asp447. Mg(2+) contacts are provided by Asp303 and Asp307. Positions 303-307 match the DDXXD motif motif; the sequence is DDIYD. Positions 447, 451, and 455 each coordinate Mg(2+).

The protein belongs to the terpene synthase family. Tpsb subfamily. It depends on Mg(2+) as a cofactor. Mn(2+) serves as cofactor. As to expression, highly expressed in glandular trichomes.

It catalyses the reaction (2E,6E)-farnesyl diphosphate + H2O = (2E,6E)-hedycaryol + diphosphate. Its pathway is secondary metabolite biosynthesis; terpenoid biosynthesis. Involved in sesquiterpene olefins biosynthesis, constituants of cannabinoids and terpenoids-rich resins. Catalyzes primarily the conversion of (2E)-farnesyl diphosphate to hedycaryol, which is spontaneously converted to elemol as a thermal degradation product. This Cannabis sativa (Hemp) protein is Hedycaryol synthase TPS20CT.